Consider the following 335-residue polypeptide: Glutaredoxin-3 (335 aa).

Alanine 2 bears the N-acetylalanine mark. One can recognise a Thioredoxin domain in the interval 2-117 (AAGAAEAAVA…LTKKVQRHAS (116 aa)). 2 positions are modified to phosphoserine: serine 117 and serine 120. 2 Glutaredoxin domains span residues 144-236 (APCM…PKLE) and 237-335 (ERLK…RGEN). Positions 159 and 261 each coordinate [2Fe-2S] cluster.

Homodimer; the homodimer is independent of 2Fe-2S clusters. Heterotrimer; forms a heterotrimeric complex composed by two BOLA2 molecules and one GLRX3 molecule; linked by [2Fe-2S] clusters. Interacts (via N-terminus) with PRKCQ/PKC-theta. Interacts (via C-terminus) with CSRP3. Interacts with CSRP2. As to expression, expressed in heart, spleen, testis and, to a lower extent, in thymus and peripheral blood leukocytes. Weakly expressed in lung, placenta, colon and small intestine.

The protein localises to the cytoplasm. The protein resides in the cytosol. It is found in the cell cortex. It localises to the myofibril. Its subcellular location is the sarcomere. The protein localises to the z line. Its function is as follows. Together with BOLA2, acts as a cytosolic iron-sulfur (Fe-S) cluster assembly factor that facilitates [2Fe-2S] cluster insertion into a subset of cytosolic proteins. Acts as a critical negative regulator of cardiac hypertrophy and a positive inotropic regulator. Required for hemoglobin maturation. Does not possess any thyoredoxin activity since it lacks the conserved motif that is essential for catalytic activity. In Homo sapiens (Human), this protein is Glutaredoxin-3 (GLRX3).